The sequence spans 242 residues: Demethylmenaquinone methyltransferase (242 aa).

S-adenosyl-L-methionine contacts are provided by residues Thr-62, Asp-83, and 112 to 113 (DV).

The protein belongs to the class I-like SAM-binding methyltransferase superfamily. MenG/UbiE family.

It catalyses the reaction a 2-demethylmenaquinol + S-adenosyl-L-methionine = a menaquinol + S-adenosyl-L-homocysteine + H(+). It participates in quinol/quinone metabolism; menaquinone biosynthesis; menaquinol from 1,4-dihydroxy-2-naphthoate: step 2/2. Functionally, methyltransferase required for the conversion of demethylmenaquinol (DMKH2) to menaquinol (MKH2). This chain is Demethylmenaquinone methyltransferase, found in Protochlamydia amoebophila (strain UWE25).